Reading from the N-terminus, the 214-residue chain is Probable nicotinate-nucleotide adenylyltransferase (214 aa).

It belongs to the NadD family.

The catalysed reaction is nicotinate beta-D-ribonucleotide + ATP + H(+) = deamido-NAD(+) + diphosphate. It participates in cofactor biosynthesis; NAD(+) biosynthesis; deamido-NAD(+) from nicotinate D-ribonucleotide: step 1/1. In terms of biological role, catalyzes the reversible adenylation of nicotinate mononucleotide (NaMN) to nicotinic acid adenine dinucleotide (NaAD). This chain is Probable nicotinate-nucleotide adenylyltransferase, found in Aeromonas salmonicida (strain A449).